Reading from the N-terminus, the 444-residue chain is Probable glycine dehydrogenase (decarboxylating) subunit 1 (444 aa).

It belongs to the GcvP family. N-terminal subunit subfamily. The glycine cleavage system is composed of four proteins: P, T, L and H. In this organism, the P 'protein' is a heterodimer of two subunits.

It carries out the reaction N(6)-[(R)-lipoyl]-L-lysyl-[glycine-cleavage complex H protein] + glycine + H(+) = N(6)-[(R)-S(8)-aminomethyldihydrolipoyl]-L-lysyl-[glycine-cleavage complex H protein] + CO2. The glycine cleavage system catalyzes the degradation of glycine. The P protein binds the alpha-amino group of glycine through its pyridoxal phosphate cofactor; CO(2) is released and the remaining methylamine moiety is then transferred to the lipoamide cofactor of the H protein. The protein is Probable glycine dehydrogenase (decarboxylating) subunit 1 of Prosthecochloris aestuarii (strain DSM 271 / SK 413).